A 257-amino-acid polypeptide reads, in one-letter code: DNA repair protein RecO (257 aa).

The protein belongs to the RecO family.

Its function is as follows. Involved in DNA repair and RecF pathway recombination. This is DNA repair protein RecO from Clostridium kluyveri (strain ATCC 8527 / DSM 555 / NBRC 12016 / NCIMB 10680 / K1).